A 147-amino-acid polypeptide reads, in one-letter code: UPF0735 ACT domain-containing protein BPUM_2431 (147 aa).

An ACT domain is found at 70-145; it reads TLFFHLEDRS…FVEKVEILGS (76 aa).

This sequence belongs to the UPF0735 family.

This Bacillus pumilus (strain SAFR-032) protein is UPF0735 ACT domain-containing protein BPUM_2431.